Consider the following 64-residue polypeptide: Large ribosomal subunit protein eL37 (64 aa).

Zn(2+) is bound by residues cysteine 20, cysteine 23, cysteine 35, and cysteine 38. The C4-type zinc-finger motif lies at 20 to 38 (CRRCGRRAYHVRKKACAAC).

Belongs to the eukaryotic ribosomal protein eL37 family. Zn(2+) serves as cofactor.

In terms of biological role, binds to the 23S rRNA. This is Large ribosomal subunit protein eL37 from Methanococcus vannielii (strain ATCC 35089 / DSM 1224 / JCM 13029 / OCM 148 / SB).